The primary structure comprises 829 residues: Probable methyltransferase PMT26 (829 aa).

The Cytoplasmic portion of the chain corresponds to Met1–Asn17. Residues Tyr18–Met38 form a helical; Signal-anchor for type II membrane protein membrane-spanning segment. The Lumenal segment spans residues Thr39–Gly829. Residues Asp55–Ala258 form a disordered region. 4 stretches are compositionally biased toward basic and acidic residues: residues Asn85 to Ser143, Leu151 to Asn160, Thr168 to Thr177, and Glu187 to Thr231. Asn215, Asn247, Asn264, and Asn270 each carry an N-linked (GlcNAc...) asparagine glycan. Polar residues predominate over residues Gln241–Asp252. The disordered stretch occupies residues Gly271–Gly291. Residues Ser280 to Gly291 show a composition bias toward basic and acidic residues. 4 N-linked (GlcNAc...) asparagine glycosylation sites follow: Asn302, Asn579, Asn595, and Asn756.

It belongs to the methyltransferase superfamily.

It is found in the golgi apparatus membrane. The chain is Probable methyltransferase PMT26 from Arabidopsis thaliana (Mouse-ear cress).